A 262-amino-acid chain; its full sequence is Small ribosomal subunit protein eS1 (262 aa).

This sequence belongs to the eukaryotic ribosomal protein eS1 family. As to quaternary structure, component of the small ribosomal subunit. Mature ribosomes consist of a small (40S) and a large (60S) subunit. The 40S subunit contains about 33 different proteins and 1 molecule of RNA (18S). The 60S subunit contains about 49 different proteins and 3 molecules of RNA (25S, 5.8S and 5S).

The protein localises to the cytoplasm. The chain is Small ribosomal subunit protein eS1 from Plasmodium knowlesi (strain H).